The following is a 434-amino-acid chain: 3-phosphoshikimate 1-carboxyvinyltransferase (434 aa).

Positions 15, 16, and 20 each coordinate 3-phosphoshikimate. K15 provides a ligand contact to phosphoenolpyruvate. G96 and R124 together coordinate phosphoenolpyruvate. The 3-phosphoshikimate site is built by S169, Q171, S195, D319, and K346. Q171 contributes to the phosphoenolpyruvate binding site. D319 acts as the Proton acceptor in catalysis. Phosphoenolpyruvate contacts are provided by R350 and R394.

It belongs to the EPSP synthase family. As to quaternary structure, monomer.

The protein localises to the cytoplasm. It carries out the reaction 3-phosphoshikimate + phosphoenolpyruvate = 5-O-(1-carboxyvinyl)-3-phosphoshikimate + phosphate. It participates in metabolic intermediate biosynthesis; chorismate biosynthesis; chorismate from D-erythrose 4-phosphate and phosphoenolpyruvate: step 6/7. Its function is as follows. Catalyzes the transfer of the enolpyruvyl moiety of phosphoenolpyruvate (PEP) to the 5-hydroxyl of shikimate-3-phosphate (S3P) to produce enolpyruvyl shikimate-3-phosphate and inorganic phosphate. The protein is 3-phosphoshikimate 1-carboxyvinyltransferase of Chlorobaculum tepidum (strain ATCC 49652 / DSM 12025 / NBRC 103806 / TLS) (Chlorobium tepidum).